The chain runs to 156 residues: Glutamine--fructose-6-phosphate aminotransferase [isomerizing] (156 aa).

Residues 4–146 (MAHHIVPARD…VLKGTDVDQP (143 aa)) form the SIS domain. Lys-151 functions as the For Fru-6P isomerization activity in the catalytic mechanism.

Homodimer.

The protein localises to the cytoplasm. It carries out the reaction D-fructose 6-phosphate + L-glutamine = D-glucosamine 6-phosphate + L-glutamate. Functionally, catalyzes the first step in hexosamine metabolism, converting fructose-6P into glucosamine-6P using glutamine as a nitrogen source. The chain is Glutamine--fructose-6-phosphate aminotransferase [isomerizing] (glmS) from Sphingobium yanoikuyae (Sphingomonas yanoikuyae).